A 459-amino-acid polypeptide reads, in one-letter code: Cysteine--tRNA ligase (459 aa).

Cys31 is a Zn(2+) binding site. A 'HIGH' region motif is present at residues 33–43 (PTVYYNPHIGN). Zn(2+) contacts are provided by Cys216, His241, and Glu245. The 'KMSKS' region signature appears at 274–278 (KMSKS). An ATP-binding site is contributed by Lys277.

Belongs to the class-I aminoacyl-tRNA synthetase family. Monomer. It depends on Zn(2+) as a cofactor.

It is found in the cytoplasm. The catalysed reaction is tRNA(Cys) + L-cysteine + ATP = L-cysteinyl-tRNA(Cys) + AMP + diphosphate. This is Cysteine--tRNA ligase from Rickettsia rickettsii (strain Iowa).